Here is a 501-residue protein sequence, read N- to C-terminus: Lysine--tRNA ligase (501 aa).

Mg(2+)-binding residues include E404 and E411.

This sequence belongs to the class-II aminoacyl-tRNA synthetase family. Homodimer. The cofactor is Mg(2+).

Its subcellular location is the cytoplasm. The enzyme catalyses tRNA(Lys) + L-lysine + ATP = L-lysyl-tRNA(Lys) + AMP + diphosphate. The chain is Lysine--tRNA ligase from Campylobacter jejuni subsp. doylei (strain ATCC BAA-1458 / RM4099 / 269.97).